Reading from the N-terminus, the 479-residue chain is MTVTTSSPATAEGRTPGIGRVARVIGPVVDVEFAPDELPEIYQALEVDRTIGGETLTLTLEVAQHIGDNTVRAISMQQTDGLVRGAVVRDTGAPISVPVGDATKGHVFNVLGTPLDVDKVDAETRWSIHRQAPAFDQLESKTEMFTTGIKVIDLLAPYVRGGKIGLFGGAGVGKTVIIQEMIRRVAKEFGGVSVFAGVGERTREGNDLFLEMTEAGVIEDTALVFGQMDEPPGTRLRVALGALTMAEYFRDVQKQDVLLFIDNIFRFTQAGSEVSTLLGRMPSAVGYQPTLADEMGVLQERITSTRGHSITSLQAIYVPADDLTDPAPATTFTHLDAQTVLDRSISDLGIYPAVSPLDSNSRILDARYLGQEHYDTAREVQRILQRYKDLQDIIAILGIDELSEEDKILVNRARRIQRFLSQPFFVAEQFTNIPGKFVPLDETIDSFKRLSQGDYDHLPEQAFFMCGGIEDAEKNAENL.

ATP is bound at residue 168 to 175 (GGAGVGKT).

Belongs to the ATPase alpha/beta chains family. F-type ATPases have 2 components, CF(1) - the catalytic core - and CF(0) - the membrane proton channel. CF(1) has five subunits: alpha(3), beta(3), gamma(1), delta(1), epsilon(1). CF(0) has three main subunits: a(1), b(2) and c(9-12). The alpha and beta chains form an alternating ring which encloses part of the gamma chain. CF(1) is attached to CF(0) by a central stalk formed by the gamma and epsilon chains, while a peripheral stalk is formed by the delta and b chains.

It is found in the cell membrane. It carries out the reaction ATP + H2O + 4 H(+)(in) = ADP + phosphate + 5 H(+)(out). Its function is as follows. Produces ATP from ADP in the presence of a proton gradient across the membrane. The catalytic sites are hosted primarily by the beta subunits. This is ATP synthase subunit beta from Frankia alni (strain DSM 45986 / CECT 9034 / ACN14a).